Reading from the N-terminus, the 869-residue chain is Valine--tRNA ligase (869 aa).

Positions 47 to 57 (PYPTGNFHIGN) match the 'HIGH' region motif. Positions 521 to 525 (KMSKS) match the 'KMSKS' region motif. Lys524 is a binding site for ATP.

This sequence belongs to the class-I aminoacyl-tRNA synthetase family. ValS type 2 subfamily.

It localises to the cytoplasm. It catalyses the reaction tRNA(Val) + L-valine + ATP = L-valyl-tRNA(Val) + AMP + diphosphate. Functionally, catalyzes the attachment of valine to tRNA(Val). As ValRS can inadvertently accommodate and process structurally similar amino acids such as threonine, to avoid such errors, it has a 'posttransfer' editing activity that hydrolyzes mischarged Thr-tRNA(Val) in a tRNA-dependent manner. This Methanosarcina barkeri (strain Fusaro / DSM 804) protein is Valine--tRNA ligase.